The sequence spans 284 residues: Bifunctional protein FolD (284 aa).

NADP(+) contacts are provided by residues 166–168 (GAS) and Ile-232.

This sequence belongs to the tetrahydrofolate dehydrogenase/cyclohydrolase family. As to quaternary structure, homodimer.

The catalysed reaction is (6R)-5,10-methylene-5,6,7,8-tetrahydrofolate + NADP(+) = (6R)-5,10-methenyltetrahydrofolate + NADPH. It carries out the reaction (6R)-5,10-methenyltetrahydrofolate + H2O = (6R)-10-formyltetrahydrofolate + H(+). Its pathway is one-carbon metabolism; tetrahydrofolate interconversion. Its function is as follows. Catalyzes the oxidation of 5,10-methylenetetrahydrofolate to 5,10-methenyltetrahydrofolate and then the hydrolysis of 5,10-methenyltetrahydrofolate to 10-formyltetrahydrofolate. This chain is Bifunctional protein FolD, found in Pseudomonas entomophila (strain L48).